Reading from the N-terminus, the 252-residue chain is Probable S-methyl-5'-thioinosine phosphorylase (252 aa).

Phosphate-binding positions include Thr8 and 44–45; that span reads RH. Met173 contributes to the substrate binding site. Residue Thr174 coordinates phosphate. A substrate-binding site is contributed by 197 to 199; that stretch reads NYA.

It belongs to the PNP/MTAP phosphorylase family. MTAP subfamily. Homotrimer.

The enzyme catalyses S-methyl-5'-thioinosine + phosphate = 5-(methylsulfanyl)-alpha-D-ribose 1-phosphate + hypoxanthine. It participates in purine metabolism; purine nucleoside salvage. Its function is as follows. Catalyzes the reversible phosphorylation of S-methyl-5'-thioinosine (MTI) to hypoxanthine and 5-methylthioribose-1-phosphate. Involved in the breakdown of S-methyl-5'-thioadenosine (MTA), a major by-product of polyamine biosynthesis. Catabolism of (MTA) occurs via deamination to MTI and phosphorolysis to hypoxanthine. This is Probable S-methyl-5'-thioinosine phosphorylase from Methanocaldococcus jannaschii (strain ATCC 43067 / DSM 2661 / JAL-1 / JCM 10045 / NBRC 100440) (Methanococcus jannaschii).